The following is a 210-amino-acid chain: MVCGGFACSKNALCALNVVYMLVSLLLIGVAAWGKGLGLVSSIHIIGGVIAVGVFLLLIAVAGLVGAVNHHQVLLFFYMIILGLVFIFQFVISCSCLAINRSKQTDVINASWWVMSNKTRDELERSFDCCGLFNLTTLYQQDYDFCTAICKSQSPTCQMCGEKFLKHSDEALKILGGVGLFFSFTEILGVWLAMRFRNQKDPRANPSAFL.

Over 1–12 the chain is Cytoplasmic; it reads MVCGGFACSKNA. The chain crosses the membrane as a helical span at residues 13–33; it reads LCALNVVYMLVSLLLIGVAAW. Topologically, residues 34–44 are extracellular; the sequence is GKGLGLVSSIH. A helical membrane pass occupies residues 45-65; the sequence is IIGGVIAVGVFLLLIAVAGLV. Residues 66-72 are Cytoplasmic-facing; that stretch reads GAVNHHQ. Residues 73–93 form a helical membrane-spanning segment; the sequence is VLLFFYMIILGLVFIFQFVIS. Topologically, residues 94 to 173 are extracellular; that stretch reads CSCLAINRSK…FLKHSDEALK (80 aa). Residues Asn100, Asn109, Asn117, and Asn134 are each glycosylated (N-linked (GlcNAc...) asparagine). Residues 174 to 194 traverse the membrane as a helical segment; sequence ILGGVGLFFSFTEILGVWLAM. The Cytoplasmic segment spans residues 195–210; the sequence is RFRNQKDPRANPSAFL.

Belongs to the tetraspanin (TM4SF) family.

The protein localises to the membrane. The protein is Tetraspanin-31 (TSPAN31) of Homo sapiens (Human).